Consider the following 100-residue polypeptide: Urease subunit gamma (100 aa).

This sequence belongs to the urease gamma subunit family. Heterotrimer of UreA (gamma), UreB (beta) and UreC (alpha) subunits. Three heterotrimers associate to form the active enzyme.

The protein resides in the cytoplasm. It carries out the reaction urea + 2 H2O + H(+) = hydrogencarbonate + 2 NH4(+). It functions in the pathway nitrogen metabolism; urea degradation; CO(2) and NH(3) from urea (urease route): step 1/1. The chain is Urease subunit gamma from Rhodopseudomonas palustris (strain ATCC BAA-98 / CGA009).